Consider the following 209-residue polypeptide: A-type ATP synthase subunit D (209 aa).

This sequence belongs to the V-ATPase D subunit family. Has multiple subunits with at least A(3), B(3), C, D, E, F, H, I and proteolipid K(x).

The protein resides in the cell membrane. Component of the A-type ATP synthase that produces ATP from ADP in the presence of a proton gradient across the membrane. The sequence is that of A-type ATP synthase subunit D from Methanoregula boonei (strain DSM 21154 / JCM 14090 / 6A8).